A 202-amino-acid chain; its full sequence is Holliday junction resolvase RecU (202 aa).

Mg(2+) contacts are provided by T85, D87, E100, and Q119.

Belongs to the RecU family. Mg(2+) is required as a cofactor.

It is found in the cytoplasm. It catalyses the reaction Endonucleolytic cleavage at a junction such as a reciprocal single-stranded crossover between two homologous DNA duplexes (Holliday junction).. In terms of biological role, endonuclease that resolves Holliday junction intermediates in genetic recombination. Cleaves mobile four-strand junctions by introducing symmetrical nicks in paired strands. Promotes annealing of linear ssDNA with homologous dsDNA. Required for DNA repair, homologous recombination and chromosome segregation. In Streptococcus pyogenes serotype M5 (strain Manfredo), this protein is Holliday junction resolvase RecU.